The sequence spans 350 residues: Cytosolic Fe-S cluster assembly factor NBP35 (350 aa).

The tract at residues 1–30 (MENGDIPEDANEHCPGPQSESAGKSDSCAG) is disordered. [4Fe-4S] cluster-binding residues include Cys14, Cys28, Cys31, and Cys37. ATP is bound at residue 67–74 (GKGGVGKS).

This sequence belongs to the Mrp/NBP35 ATP-binding proteins family. NUBP1/NBP35 subfamily. As to quaternary structure, homodimer and homotetramer. Predominantly homodimeric. It depends on [4Fe-4S] cluster as a cofactor.

The protein resides in the cytoplasm. Component of the cytosolic iron-sulfur (Fe-S) protein assembly (CIA) machinery. Required for maturation of extramitochondrial Fe-S proteins. Functions as a Fe-S scaffold, mediating the de novo assembly of an Fe-S cluster and its transfer to target apoproteins. Essential for embryo development. The chain is Cytosolic Fe-S cluster assembly factor NBP35 from Arabidopsis thaliana (Mouse-ear cress).